A 405-amino-acid chain; its full sequence is Imidazolonepropionase (405 aa).

Residues H72 and H74 each contribute to the Fe(3+) site. Positions 72 and 74 each coordinate Zn(2+). 4-imidazolone-5-propanoate is bound by residues R81, Y144, and H177. Residue Y144 coordinates N-formimidoyl-L-glutamate. H242 provides a ligand contact to Fe(3+). H242 contacts Zn(2+). Q245 is a binding site for 4-imidazolone-5-propanoate. D317 is a binding site for Fe(3+). D317 contacts Zn(2+). Positions 319 and 321 each coordinate N-formimidoyl-L-glutamate. T322 is a 4-imidazolone-5-propanoate binding site.

The protein belongs to the metallo-dependent hydrolases superfamily. HutI family. It depends on Zn(2+) as a cofactor. Fe(3+) serves as cofactor.

Its subcellular location is the cytoplasm. It catalyses the reaction 4-imidazolone-5-propanoate + H2O = N-formimidoyl-L-glutamate. It participates in amino-acid degradation; L-histidine degradation into L-glutamate; N-formimidoyl-L-glutamate from L-histidine: step 3/3. In terms of biological role, catalyzes the hydrolytic cleavage of the carbon-nitrogen bond in imidazolone-5-propanoate to yield N-formimidoyl-L-glutamate. It is the third step in the universal histidine degradation pathway. The polypeptide is Imidazolonepropionase (Klebsiella pneumoniae (strain 342)).